A 262-amino-acid polypeptide reads, in one-letter code: Phosphatidylglycerol--prolipoprotein diacylglyceryl transferase (262 aa).

4 helical membrane passes run 17-37, 57-77, 95-115, and 119-139; these read LAIHWYGLMYLIGFALVYALG, LIFYSVLGVVLGGRLGYVLFY, GGMSFHGGLIGVIVVMLLFAH, and LGFFTVSDFIAPLIPLGLAAG. Residue arginine 140 participates in a 1,2-diacyl-sn-glycero-3-phospho-(1'-sn-glycerol) binding. The next 3 membrane-spanning stretches (helical) occupy residues 173–193, 200–220, and 227–247; these read PSQLYELGLEGIVLFALLWWY, AGQVSAMFLMGYGAFRFLVEF, and FLGLLAAGLSMGQWLSIPMVL.

This sequence belongs to the Lgt family.

It localises to the cell inner membrane. The enzyme catalyses L-cysteinyl-[prolipoprotein] + a 1,2-diacyl-sn-glycero-3-phospho-(1'-sn-glycerol) = an S-1,2-diacyl-sn-glyceryl-L-cysteinyl-[prolipoprotein] + sn-glycerol 1-phosphate + H(+). The protein operates within protein modification; lipoprotein biosynthesis (diacylglyceryl transfer). Catalyzes the transfer of the diacylglyceryl group from phosphatidylglycerol to the sulfhydryl group of the N-terminal cysteine of a prolipoprotein, the first step in the formation of mature lipoproteins. This chain is Phosphatidylglycerol--prolipoprotein diacylglyceryl transferase, found in Bordetella bronchiseptica (strain ATCC BAA-588 / NCTC 13252 / RB50) (Alcaligenes bronchisepticus).